The following is a 127-amino-acid chain: UPF0102 protein Paes_0016 (127 aa).

The protein belongs to the UPF0102 family.

The polypeptide is UPF0102 protein Paes_0016 (Prosthecochloris aestuarii (strain DSM 271 / SK 413)).